Here is a 285-residue protein sequence, read N- to C-terminus: Diaminopimelate epimerase (285 aa).

Positions 14 and 67 each coordinate substrate. Cysteine 76 acts as the Proton donor in catalysis. Substrate contacts are provided by residues 77 to 78 (GN), asparagine 166, asparagine 199, and 217 to 218 (ER). Cysteine 226 (proton acceptor) is an active-site residue. 227–228 (GT) contributes to the substrate binding site.

This sequence belongs to the diaminopimelate epimerase family. Homodimer.

The protein localises to the cytoplasm. It catalyses the reaction (2S,6S)-2,6-diaminopimelate = meso-2,6-diaminopimelate. The protein operates within amino-acid biosynthesis; L-lysine biosynthesis via DAP pathway; DL-2,6-diaminopimelate from LL-2,6-diaminopimelate: step 1/1. Catalyzes the stereoinversion of LL-2,6-diaminopimelate (L,L-DAP) to meso-diaminopimelate (meso-DAP), a precursor of L-lysine and an essential component of the bacterial peptidoglycan. The chain is Diaminopimelate epimerase from Bacillus licheniformis (strain ATCC 14580 / DSM 13 / JCM 2505 / CCUG 7422 / NBRC 12200 / NCIMB 9375 / NCTC 10341 / NRRL NRS-1264 / Gibson 46).